A 310-amino-acid chain; its full sequence is N-acetyl-gamma-glutamyl-phosphate reductase (310 aa).

Cysteine 117 is an active-site residue.

The protein belongs to the NAGSA dehydrogenase family. Type 2 subfamily.

It localises to the cytoplasm. The catalysed reaction is N-acetyl-L-glutamate 5-semialdehyde + phosphate + NADP(+) = N-acetyl-L-glutamyl 5-phosphate + NADPH + H(+). It participates in amino-acid biosynthesis; L-arginine biosynthesis; N(2)-acetyl-L-ornithine from L-glutamate: step 3/4. Functionally, catalyzes the NADPH-dependent reduction of N-acetyl-5-glutamyl phosphate to yield N-acetyl-L-glutamate 5-semialdehyde. This Rhizobium rhizogenes (strain K84 / ATCC BAA-868) (Agrobacterium radiobacter) protein is N-acetyl-gamma-glutamyl-phosphate reductase.